Consider the following 245-residue polypeptide: 3-deoxy-manno-octulosonate cytidylyltransferase (245 aa).

Belongs to the KdsB family.

It is found in the cytoplasm. The enzyme catalyses 3-deoxy-alpha-D-manno-oct-2-ulosonate + CTP = CMP-3-deoxy-beta-D-manno-octulosonate + diphosphate. Its pathway is nucleotide-sugar biosynthesis; CMP-3-deoxy-D-manno-octulosonate biosynthesis; CMP-3-deoxy-D-manno-octulosonate from 3-deoxy-D-manno-octulosonate and CTP: step 1/1. It functions in the pathway bacterial outer membrane biogenesis; lipopolysaccharide biosynthesis. In terms of biological role, activates KDO (a required 8-carbon sugar) for incorporation into bacterial lipopolysaccharide in Gram-negative bacteria. The sequence is that of 3-deoxy-manno-octulosonate cytidylyltransferase from Desulfatibacillum aliphaticivorans.